A 608-amino-acid chain; its full sequence is Threonine--tRNA ligase (608 aa).

The editing domain stretch occupies residues M1–P145. 2 catalytic regions span residues P192–P489 and K193–P489. Positions 286, 337, and 458 each coordinate Zn(2+).

This sequence belongs to the class-II aminoacyl-tRNA synthetase family. As to quaternary structure, homodimer. It depends on Zn(2+) as a cofactor.

It localises to the cytoplasm. The catalysed reaction is tRNA(Thr) + L-threonine + ATP = L-threonyl-tRNA(Thr) + AMP + diphosphate + H(+). Catalyzes the attachment of threonine to tRNA(Thr) in a two-step reaction: L-threonine is first activated by ATP to form Thr-AMP and then transferred to the acceptor end of tRNA(Thr). Also edits incorrectly charged L-seryl-tRNA(Thr). The sequence is that of Threonine--tRNA ligase from Thermofilum pendens (strain DSM 2475 / Hrk 5).